The chain runs to 747 residues: MIIGIMKTFLLTICFLSVQTGMVAIAQDKEQTPVYLDDTQPIEVRVQDALNRMTVEEKTRLSYAQGKFSSPGCPRLGIPELWMSDGPHGVRAEINWNDWGYAGWTNDSCTAFPALTCLAASWNPLLAAKYGYAIGEEARYREKDVLLGPGVNIYRTPLNGRNFEYMGEDPYLASELCVPYIQGVQKNGVAACVKHYALNNQELWRGHIDVQLSDRALYEIYLPAFKAAVERGKAWSIMGAYNKVRGTHATHHKLLNNDILKGEWNFDGCVITDWGAAHDTYEAAMYGLDIEMGSYTNGLTSESEFGYDDYYLGKSYLKMVREGKIPMEVVNDKAARVLRLIFRTAMNRRKPFGALTSEEHYRTAYEIATEGIVLLKNGTGKKQPALLPVPQGKYKRILVVGDNATRNLMLGGGSSELKVQKVISSLDGIKAKFGDGVVYAQGYTSGRPMYGRADVIPQVTVDSLRNDAVEKAMNSDLVIFVGGLNKNHFQDCEGGDRLSYELPFAQNELIEALLKVNKNLVAVIVSGNAVEMPWVKEIPSIVQSWYLGSVGGEALADVLSGEVTPSGKLPFSYPVKLEDCPAHFFGEISYPGDSIRQEYKEDILVGYRWYDTKKVQPLFPFGYGMSYTTFEYSKPVISAQTMNTDGSIDVSVKVKNTGKVAGKEIIQLYIGDEECSVLRPVKELKDFRKVQLLPNEEKEVKFTIKPEALQFFDDKQRTWVAEPGKFKAYIAASSSDIRGTVTFEYIQ.

The first 26 residues, 1 to 26 (MIIGIMKTFLLTICFLSVQTGMVAIA), serve as a signal peptide directing secretion. Residue Asp273 is part of the active site.

It belongs to the glycosyl hydrolase 3 family.

The protein resides in the periplasm. It carries out the reaction Hydrolysis of terminal, non-reducing beta-D-glucosyl residues with release of beta-D-glucose.. It participates in glucan metabolism; xyloglucan degradation. Its function is as follows. Catalyzes the hydrolysis of terminal, non-reducing beta-D-glucosyl residues with release of beta-D-glucose in xyloglucan degradation, leading to remove the backbone 'G' units. This chain is Beta-glucosidase BoGH3A, found in Bacteroides ovatus (strain ATCC 8483 / DSM 1896 / JCM 5824 / BCRC 10623 / CCUG 4943 / NCTC 11153).